Reading from the N-terminus, the 454-residue chain is Chromosomal replication initiator protein DnaA (454 aa).

Positions 1 to 83 (MMTDSMRLVW…RPLKVLLEVA (83 aa)) are domain I, interacts with DnaA modulators. The tract at residues 83–115 (AECVAEAPETPEEAPQQLCLPAFADIPRPSSGR) is domain II. Residues 116–333 (LLNRDFTFDS…SGIKGLAARN (218 aa)) are domain III, AAA+ region. ATP contacts are provided by Gly160, Gly162, Lys163, and Ser164. Residues 334 to 454 (SIMGRGIDLK…LCGKIEAGEF (121 aa)) form a domain IV, binds dsDNA region.

The protein belongs to the DnaA family. In terms of assembly, oligomerizes as a right-handed, spiral filament on DNA at oriC.

It is found in the cytoplasm. Functionally, plays an essential role in the initiation and regulation of chromosomal replication. ATP-DnaA binds to the origin of replication (oriC) to initiate formation of the DNA replication initiation complex once per cell cycle. Binds the DnaA box (a 9 base pair repeat at the origin) and separates the double-stranded (ds)DNA. Forms a right-handed helical filament on oriC DNA; dsDNA binds to the exterior of the filament while single-stranded (ss)DNA is stabiized in the filament's interior. The ATP-DnaA-oriC complex binds and stabilizes one strand of the AT-rich DNA unwinding element (DUE), permitting loading of DNA polymerase. After initiation quickly degrades to an ADP-DnaA complex that is not apt for DNA replication. Binds acidic phospholipids. In Desulfatibacillum aliphaticivorans, this protein is Chromosomal replication initiator protein DnaA.